Reading from the N-terminus, the 97-residue chain is Large ribosomal subunit protein bL27 (97 aa).

The propeptide occupies M1 to F9.

It belongs to the bacterial ribosomal protein bL27 family. In terms of processing, the N-terminus is cleaved by ribosomal processing cysteine protease Prp.

In Syntrophomonas wolfei subsp. wolfei (strain DSM 2245B / Goettingen), this protein is Large ribosomal subunit protein bL27.